Here is a 502-residue protein sequence, read N- to C-terminus: NADH-quinone oxidoreductase subunit N (502 aa).

The next 14 membrane-spanning stretches (helical) occupy residues 16-36 (TLVP…IDLF), 47-67 (MLSL…AGVF), 85-105 (LAIL…PLAL), 113-133 (FSYP…QFMV), 138-158 (LILI…LIAM), 172-192 (FTMG…FYAL), 213-233 (IGFV…KLSM), 248-268 (SAAL…IVAM), 273-293 (FLIH…VVVT), 310-330 (MLAY…LIGT), 337-357 (LFLY…MLWI), 387-407 (ASIM…ALFW), 410-430 (MYLM…IMAL), and 470-490 (TIIG…NQLI).

This sequence belongs to the complex I subunit 2 family. NDH-1 is composed of 14 different subunits. Subunits NuoA, H, J, K, L, M, N constitute the membrane sector of the complex.

The protein resides in the cell inner membrane. It catalyses the reaction a quinone + NADH + 5 H(+)(in) = a quinol + NAD(+) + 4 H(+)(out). Its function is as follows. NDH-1 shuttles electrons from NADH, via FMN and iron-sulfur (Fe-S) centers, to quinones in the respiratory chain. The immediate electron acceptor for the enzyme in this species is believed to be ubiquinone. Couples the redox reaction to proton translocation (for every two electrons transferred, four hydrogen ions are translocated across the cytoplasmic membrane), and thus conserves the redox energy in a proton gradient. In Sulfurimonas denitrificans (strain ATCC 33889 / DSM 1251) (Thiomicrospira denitrificans (strain ATCC 33889 / DSM 1251)), this protein is NADH-quinone oxidoreductase subunit N.